The chain runs to 313 residues: Olfactory receptor 8B2 (313 aa).

The Extracellular portion of the chain corresponds to M1–Q25. N-linked (GlcNAc...) asparagine glycosylation occurs at N5. The chain crosses the membrane as a helical span at residues P26 to I46. Residues T47–H54 are Cytoplasmic-facing. Residues L55–S75 form a helical membrane-spanning segment. Over V76–T99 the chain is Extracellular. A disulfide bridge links C97 with C189. Residues R100–Y120 form a helical membrane-spanning segment. Over D121–Q139 the chain is Cytoplasmic. The chain crosses the membrane as a helical span at residues V140 to T160. Residues G161–V197 are Extracellular-facing. Residues V198–S217 form a helical membrane-spanning segment. At Y218–A237 the chain is on the cytoplasmic side. The helical transmembrane segment at F238–M258 threads the bilayer. The Extracellular segment spans residues Y259 to G270. The helical transmembrane segment at K271–L291 threads the bilayer. Topologically, residues R292–F313 are cytoplasmic.

It belongs to the G-protein coupled receptor 1 family.

Its subcellular location is the cell membrane. Odorant receptor. In Homo sapiens (Human), this protein is Olfactory receptor 8B2 (OR8B2).